Here is a 403-residue protein sequence, read N- to C-terminus: Phosphopentomutase (403 aa).

Mn(2+)-binding residues include Asp-13, Asp-298, His-303, Asp-339, His-340, and His-351.

This sequence belongs to the phosphopentomutase family. Mn(2+) serves as cofactor.

It localises to the cytoplasm. The enzyme catalyses 2-deoxy-alpha-D-ribose 1-phosphate = 2-deoxy-D-ribose 5-phosphate. It carries out the reaction alpha-D-ribose 1-phosphate = D-ribose 5-phosphate. Its pathway is carbohydrate degradation; 2-deoxy-D-ribose 1-phosphate degradation; D-glyceraldehyde 3-phosphate and acetaldehyde from 2-deoxy-alpha-D-ribose 1-phosphate: step 1/2. Functionally, isomerase that catalyzes the conversion of deoxy-ribose 1-phosphate (dRib-1-P) and ribose 1-phosphate (Rib-1-P) to deoxy-ribose 5-phosphate (dRib-5-P) and ribose 5-phosphate (Rib-5-P), respectively. The polypeptide is Phosphopentomutase (Streptococcus pyogenes serotype M5 (strain Manfredo)).